A 288-amino-acid chain; its full sequence is Phosphate import ATP-binding protein PstB (288 aa).

Positions 42–283 constitute an ABC transporter domain; sequence IRDLNFYYEN…PKEKKTRDYI (242 aa). 74 to 81 provides a ligand contact to ATP; it reads GPSGCGKS.

It belongs to the ABC transporter superfamily. Phosphate importer (TC 3.A.1.7) family. The complex is composed of two ATP-binding proteins (PstB), two transmembrane proteins (PstC and PstA) and a solute-binding protein (PstS).

The protein localises to the cell membrane. It carries out the reaction phosphate(out) + ATP + H2O = ADP + 2 phosphate(in) + H(+). Part of the ABC transporter complex PstSACB involved in phosphate import. Responsible for energy coupling to the transport system. This is Phosphate import ATP-binding protein PstB from Malacoplasma penetrans (strain HF-2) (Mycoplasma penetrans).